A 252-amino-acid polypeptide reads, in one-letter code: MPKSKRAKVYNLTQVTKKNREQKEKLFENIRECIPNYQHCFVFSIDNMRNNYLKDVRKELNDCRIFFGKTKLTARALGTTPEDAQADGLDKLSKYLSGSVGLIFTNRDPSEIKDYFVNLTQVDFARAGSVATRTITIPSGPLYSTGGEVPAEHDVPVSHTLEPELRRLGMPTRMVKGKVCLGDEAGEGDDYVICKEGETLDSRQTRLLKLFSICLSEFRVKLLAYWSAASGEVTELEKPGEAGAEEMEEDDE.

This sequence belongs to the universal ribosomal protein uL10 family. In terms of assembly, associates with the pre-60S ribosomal particle.

The protein resides in the nucleus. The protein localises to the nucleolus. Its subcellular location is the cytoplasm. In terms of biological role, component of the ribosome assembly machinery. Nuclear paralog of the ribosomal protein P0, it binds pre-60S subunits at an early stage of assembly in the nucleolus, and is replaced by P0 in cytoplasmic pre-60S subunits and mature 80S ribosomes. The chain is Ribosome assembly factor mrt4 from Neurospora crassa (strain ATCC 24698 / 74-OR23-1A / CBS 708.71 / DSM 1257 / FGSC 987).